Reading from the N-terminus, the 125-residue chain is Protein ApaG (125 aa).

Residues 3 to 125 (TAVTEGIEVT…FPLVVPGSLN (123 aa)) enclose the ApaG domain.

The sequence is that of Protein ApaG from Anaeromyxobacter dehalogenans (strain 2CP-C).